The chain runs to 571 residues: Exodeoxyribonuclease 1 (571 aa).

Residues 1-96 are N-domain; that stretch reads MGIKGLLGLL…STEQKRKERR (96 aa). Positions 30, 78, 150, 152, 171, 173, and 225 each coordinate Mg(2+). Residues 114–245 form an I-domain region; the sequence is QAIMQFSRCV…KTALRYLQKY (132 aa). Disordered stretches follow at residues 464–489 and 530–559; these read KEID…SASP and RKNH…NPRP. The segment covering 470–489 has biased composition (polar residues); that stretch reads VPSQSNNTTPTSAKSDSASP.

This sequence belongs to the XPG/RAD2 endonuclease family. EXO1 subfamily. In terms of assembly, monomer. Mg(2+) serves as cofactor.

It is found in the nucleus. In terms of biological role, 5'-&gt;3' double-stranded DNA exonuclease that could act in a pathway that corrects mismatched base pairs. The polypeptide is Exodeoxyribonuclease 1 (exo1) (Schizosaccharomyces pombe (strain 972 / ATCC 24843) (Fission yeast)).